Reading from the N-terminus, the 334-residue chain is Protein-methionine-sulfoxide reductase catalytic subunit MsrP (334 aa).

Residues 1 to 44 (MKKIRPLTEADVTAESAFFMQRRQVLKALGISAAALSLPSTAQA) constitute a signal peptide (tat-type signal). Residues Asn-88, 91 to 92 (YE), Cys-146, Thr-181, Asn-233, Arg-238, and 249 to 251 (GIK) each bind Mo-molybdopterin.

This sequence belongs to the MsrP family. In terms of assembly, heterodimer of a catalytic subunit (MsrP) and a heme-binding subunit (MsrQ). It depends on Mo-molybdopterin as a cofactor. In terms of processing, predicted to be exported by the Tat system. The position of the signal peptide cleavage has not been experimentally proven.

The protein resides in the periplasm. The catalysed reaction is L-methionyl-[protein] + a quinone + H2O = L-methionyl-(S)-S-oxide-[protein] + a quinol. It catalyses the reaction L-methionyl-[protein] + a quinone + H2O = L-methionyl-(R)-S-oxide-[protein] + a quinol. In terms of biological role, part of the MsrPQ system that repairs oxidized periplasmic proteins containing methionine sulfoxide residues (Met-O), using respiratory chain electrons. Thus protects these proteins from oxidative-stress damage caused by reactive species of oxygen and chlorine generated by the host defense mechanisms. MsrPQ is essential for the maintenance of envelope integrity under bleach stress, rescuing a wide series of structurally unrelated periplasmic proteins from methionine oxidation, including the primary periplasmic chaperone SurA and the lipoprotein Pal. The catalytic subunit MsrP is non-stereospecific, being able to reduce both (R-) and (S-) diastereoisomers of methionine sulfoxide. The chain is Protein-methionine-sulfoxide reductase catalytic subunit MsrP from Salmonella arizonae (strain ATCC BAA-731 / CDC346-86 / RSK2980).